The primary structure comprises 272 residues: Shikimate dehydrogenase (NADP(+)) (272 aa).

Shikimate contacts are provided by residues 14–16 (SKS) and Thr61. Catalysis depends on Lys65, which acts as the Proton acceptor. Residue Glu77 coordinates NADP(+). Positions 86 and 102 each coordinate shikimate. NADP(+) contacts are provided by residues 126-130 (GAGGA), 149-154 (NRTVSR), and Met213. Tyr215 is a shikimate binding site. Gly237 is a binding site for NADP(+).

The protein belongs to the shikimate dehydrogenase family. Homodimer.

The catalysed reaction is shikimate + NADP(+) = 3-dehydroshikimate + NADPH + H(+). The protein operates within metabolic intermediate biosynthesis; chorismate biosynthesis; chorismate from D-erythrose 4-phosphate and phosphoenolpyruvate: step 4/7. In terms of biological role, involved in the biosynthesis of the chorismate, which leads to the biosynthesis of aromatic amino acids. Catalyzes the reversible NADPH linked reduction of 3-dehydroshikimate (DHSA) to yield shikimate (SA). The sequence is that of Shikimate dehydrogenase (NADP(+)) from Escherichia coli O7:K1 (strain IAI39 / ExPEC).